The chain runs to 151 residues: Deoxyuridine 5'-triphosphate nucleotidohydrolase (151 aa).

Substrate-binding positions include 70-72, asparagine 83, 87-89, and methionine 97; these read RSG and LID.

This sequence belongs to the dUTPase family. Mg(2+) serves as cofactor.

The catalysed reaction is dUTP + H2O = dUMP + diphosphate + H(+). It participates in pyrimidine metabolism; dUMP biosynthesis; dUMP from dCTP (dUTP route): step 2/2. This enzyme is involved in nucleotide metabolism: it produces dUMP, the immediate precursor of thymidine nucleotides and it decreases the intracellular concentration of dUTP so that uracil cannot be incorporated into DNA. The protein is Deoxyuridine 5'-triphosphate nucleotidohydrolase of Actinobacillus succinogenes (strain ATCC 55618 / DSM 22257 / CCUG 43843 / 130Z).